The chain runs to 236 residues: Leucyl/phenylalanyl-tRNA--protein transferase (236 aa).

Belongs to the L/F-transferase family.

The protein localises to the cytoplasm. It carries out the reaction N-terminal L-lysyl-[protein] + L-leucyl-tRNA(Leu) = N-terminal L-leucyl-L-lysyl-[protein] + tRNA(Leu) + H(+). The enzyme catalyses N-terminal L-arginyl-[protein] + L-leucyl-tRNA(Leu) = N-terminal L-leucyl-L-arginyl-[protein] + tRNA(Leu) + H(+). The catalysed reaction is L-phenylalanyl-tRNA(Phe) + an N-terminal L-alpha-aminoacyl-[protein] = an N-terminal L-phenylalanyl-L-alpha-aminoacyl-[protein] + tRNA(Phe). In terms of biological role, functions in the N-end rule pathway of protein degradation where it conjugates Leu, Phe and, less efficiently, Met from aminoacyl-tRNAs to the N-termini of proteins containing an N-terminal arginine or lysine. This is Leucyl/phenylalanyl-tRNA--protein transferase from Shewanella woodyi (strain ATCC 51908 / MS32).